Consider the following 132-residue polypeptide: Minor structural pilin EpdB (132 aa).

The propeptide occupies 1–4 (MSKG). The QXSXEXXXL motif lies at 9–19 (EFIVLFLALLV).

In terms of processing, the N-terminus is probably cleaved by the prepilin peptidase EppA, which recognizes the class III signal sequence.

The protein localises to the secreted. Its subcellular location is the cell surface. The protein resides in the fimbrium. Its function is as follows. Minor component of the type IV-like pili. Essential for pili formation. In Methanococcus maripaludis (strain DSM 14266 / JCM 13030 / NBRC 101832 / S2 / LL), this protein is Minor structural pilin EpdB.